The primary structure comprises 197 residues: Rac-like GTP-binding protein RAC1 (197 aa).

13-20 (GDGAVGKT) is a GTP binding site. The short motif at 35–43 (YVPTVFDNF) is the Effector region element. Residues 60–64 (DTAGQ) and 118–121 (TKLD) contribute to the GTP site. Cys-194 carries the cysteine methyl ester modification. Cys-194 is lipidated: S-geranylgeranyl cysteine. Residues 195 to 197 (SIL) constitute a propeptide, removed in mature form.

The protein belongs to the small GTPase superfamily. Rho family.

The protein localises to the cytoplasm. Its subcellular location is the membrane. Functionally, inactive GDP-bound Rho GTPases reside in the cytosol, are found in a complex with Rho GDP-dissociation inhibitors (Rho GDIs), and are released from the GDI protein in order to translocate to membranes upon activation. This chain is Rac-like GTP-binding protein RAC1 (RAC1), found in Lotus japonicus (Lotus corniculatus var. japonicus).